The sequence spans 1065 residues: MVAYLNIHTAYDLLNSSLKIEDAVRLAVSENVDALAITDTNVLYGFPKFYDACIANNIKPIFGMTIYVTNGLNTVETVVLAKNNDGLKDLYQLSSEIKMNALEHVSFELLKRFSNNMIIIFKKVGDQHRDIVQVFETHNDTYMDHLSISIQGRKHVWIQNVCYQTRQDADTISALAAIRDNTKLDLIHDQEDFGAHFLTEKEINQLDINQEYLTQVDVIAQKCDAELKYHQSLLPQYETPNDESAKKYLWRVLVTQLKKLELNYDVYLERLKYEYKVITNMGFEDYFLIVSDLIHYAKTNDVMVGPGRGSSAGSLVSYLLGITTIDPIKFNLLFERFLNPERVTMPDIDIDFEDTRRERVIQYVQEKYGELHVSGIVTFGHLLARAVARDVGRIMGFDEVTLNEISSLIPHKLGITLDEAYQIDDFKKFVHRNHRHERWFSICKKLEGLPRHTSTHAAGIIINDHPLYEYAPLTKGDTGLLTQWTMTEAERIGLLKIDFLGLRNLSIIHQILTQVKKDLGINIDIEKIPFDDQKVFELLSQGDTTGIFQLESDGVRSVLKKLKPEHFEDIVAVTSLYRPGPMEEIPTYITRRHDPSKVQYLHPHLEPILKNTYGVIIYQEQIMQIASTFANFSYGEADILRRAMSKKNRAVLESERQHFIEGAKQNGYHEDISKQIFDLILKFADYGFPRAHAVSYSKIAYIMSFLKVHYPNYFYANILSNVIGSEKKTAQMIEEAKKQGITILPPNINESHWFYKPSQEGIYLSIGTIKGVGYQSVKVIVDERYQNGKFKDFFDFARRIPKRVKTRKLLEALILVGAFDAFGKTRSTLLQAIDQVLDGDLNIEQDGFLFDILTPKQMYEDKEELPDALISQYEKEYLGFYVSQHPVDKKFVAKQYLTIFKLSNAQNYKPILVQFDKVKQIRTKNGQNMAFVTLNDGIETLDGVIFPNQFKKYEELLSHNDLFIVSGKFDHRKQQRQLIINEIQTLATFEEQKLAFAKQIIIRNKSQIDMFEEMIKATKENANDVVLSFYDETIKQMTTLGYINQKDSMFNNFIQSFNPSDIRLI.

It belongs to the DNA polymerase type-C family. DnaE subfamily. As to quaternary structure, DNA polymerase III contains a core (composed of alpha, epsilon and theta chains) that associates with a tau subunit. This core dimerizes to form the PolIII' complex. PolIII' associates with the gamma complex (composed of gamma, delta, delta', psi and chi chains) and with the beta chain to form the complete DNA polymerase III complex.

It is found in the cytoplasm. The enzyme catalyses DNA(n) + a 2'-deoxyribonucleoside 5'-triphosphate = DNA(n+1) + diphosphate. Functionally, DNA polymerase III is a complex, multichain enzyme responsible for most of the replicative synthesis in bacteria. This DNA polymerase also exhibits 3' to 5' exonuclease activity. The alpha chain is the DNA polymerase. The protein is DNA polymerase III subunit alpha (dnaE) of Staphylococcus aureus (strain COL).